Reading from the N-terminus, the 251-residue chain is Aspartate/glutamate leucyltransferase (251 aa).

The protein belongs to the R-transferase family. Bpt subfamily.

It localises to the cytoplasm. It catalyses the reaction N-terminal L-glutamyl-[protein] + L-leucyl-tRNA(Leu) = N-terminal L-leucyl-L-glutamyl-[protein] + tRNA(Leu) + H(+). The enzyme catalyses N-terminal L-aspartyl-[protein] + L-leucyl-tRNA(Leu) = N-terminal L-leucyl-L-aspartyl-[protein] + tRNA(Leu) + H(+). Functionally, functions in the N-end rule pathway of protein degradation where it conjugates Leu from its aminoacyl-tRNA to the N-termini of proteins containing an N-terminal aspartate or glutamate. This Stenotrophomonas maltophilia (strain R551-3) protein is Aspartate/glutamate leucyltransferase.